The following is a 209-amino-acid chain: GTP cyclohydrolase 1 (209 aa).

Zn(2+) contacts are provided by Cys-100, His-103, and Cys-171.

Belongs to the GTP cyclohydrolase I family. In terms of assembly, toroid-shaped homodecamer, composed of two pentamers of five dimers.

It carries out the reaction GTP + H2O = 7,8-dihydroneopterin 3'-triphosphate + formate + H(+). The protein operates within cofactor biosynthesis; 7,8-dihydroneopterin triphosphate biosynthesis; 7,8-dihydroneopterin triphosphate from GTP: step 1/1. In Ralstonia nicotianae (strain ATCC BAA-1114 / GMI1000) (Ralstonia solanacearum), this protein is GTP cyclohydrolase 1.